The primary structure comprises 248 residues: Ribosomal RNA small subunit methyltransferase J (248 aa).

S-adenosyl-L-methionine-binding positions include 98–99 (RD), 114–115 (ER), 150–151 (SS), and D168.

It belongs to the methyltransferase superfamily. RsmJ family.

The protein localises to the cytoplasm. The enzyme catalyses guanosine(1516) in 16S rRNA + S-adenosyl-L-methionine = N(2)-methylguanosine(1516) in 16S rRNA + S-adenosyl-L-homocysteine + H(+). In terms of biological role, specifically methylates the guanosine in position 1516 of 16S rRNA. This Shewanella denitrificans (strain OS217 / ATCC BAA-1090 / DSM 15013) protein is Ribosomal RNA small subunit methyltransferase J.